Here is a 482-residue protein sequence, read N- to C-terminus: Bifunctional protein GlmU (482 aa).

Residues 1–238 (MSATSPAAVV…HREILGINNR (238 aa)) form a pyrophosphorylase region. Residues 12–15 (LAAG), lysine 26, glutamine 79, and 84–85 (GT) each bind UDP-N-acetyl-alpha-D-glucosamine. Residue aspartate 110 coordinates Mg(2+). Residues glycine 147, glutamate 163, asparagine 178, and asparagine 236 each coordinate UDP-N-acetyl-alpha-D-glucosamine. Asparagine 236 contributes to the Mg(2+) binding site. A linker region spans residues 239 to 259 (LQLAEARRLLNERLLERAMLA). The N-acetyltransferase stretch occupies residues 260-482 (GVTVVDPAST…ASSQETDGQS (223 aa)). UDP-N-acetyl-alpha-D-glucosamine contacts are provided by arginine 341 and lysine 359. Catalysis depends on histidine 371, which acts as the Proton acceptor. The UDP-N-acetyl-alpha-D-glucosamine site is built by tyrosine 374 and asparagine 385. Acetyl-CoA is bound by residues alanine 388, 394–395 (NY), serine 413, alanine 431, and arginine 448. Residues 458 to 482 (VARKRPGSAAAQAAQASSQETDGQS) are disordered. Residues 465 to 476 (SAAAQAAQASSQ) are compositionally biased toward low complexity.

This sequence in the N-terminal section; belongs to the N-acetylglucosamine-1-phosphate uridyltransferase family. In the C-terminal section; belongs to the transferase hexapeptide repeat family. Homotrimer. The cofactor is Mg(2+).

The protein localises to the cytoplasm. The enzyme catalyses alpha-D-glucosamine 1-phosphate + acetyl-CoA = N-acetyl-alpha-D-glucosamine 1-phosphate + CoA + H(+). It carries out the reaction N-acetyl-alpha-D-glucosamine 1-phosphate + UTP + H(+) = UDP-N-acetyl-alpha-D-glucosamine + diphosphate. Its pathway is nucleotide-sugar biosynthesis; UDP-N-acetyl-alpha-D-glucosamine biosynthesis; N-acetyl-alpha-D-glucosamine 1-phosphate from alpha-D-glucosamine 6-phosphate (route II): step 2/2. It functions in the pathway nucleotide-sugar biosynthesis; UDP-N-acetyl-alpha-D-glucosamine biosynthesis; UDP-N-acetyl-alpha-D-glucosamine from N-acetyl-alpha-D-glucosamine 1-phosphate: step 1/1. The protein operates within bacterial outer membrane biogenesis; LPS lipid A biosynthesis. Functionally, catalyzes the last two sequential reactions in the de novo biosynthetic pathway for UDP-N-acetylglucosamine (UDP-GlcNAc). The C-terminal domain catalyzes the transfer of acetyl group from acetyl coenzyme A to glucosamine-1-phosphate (GlcN-1-P) to produce N-acetylglucosamine-1-phosphate (GlcNAc-1-P), which is converted into UDP-GlcNAc by the transfer of uridine 5-monophosphate (from uridine 5-triphosphate), a reaction catalyzed by the N-terminal domain. The chain is Bifunctional protein GlmU from Streptomyces griseus subsp. griseus (strain JCM 4626 / CBS 651.72 / NBRC 13350 / KCC S-0626 / ISP 5235).